Reading from the N-terminus, the 1237-residue chain is Zinc finger protein 687 (1237 aa).

Disordered regions lie at residues 1-80 (MGDM…PDIS) and 96-330 (EALA…PLKV). Over residues 97–111 (ALAGGSAGDGAQAAG) the composition is skewed to low complexity. Ser102, Ser129, and Ser140 each carry phosphoserine. The segment covering 132-144 (PSLPGTPHSPAPP) has biased composition (pro residues). At Thr148 the chain carries Phosphothreonine. Residues Ser227, Ser242, Ser251, Ser253, Ser266, and Ser271 each carry the phosphoserine modification. The span at 234 to 244 (LAQQGSGSSPK) shows a compositional bias: polar residues. Lys285 participates in a covalent cross-link: Glycyl lysine isopeptide (Lys-Gly) (interchain with G-Cter in SUMO2). Residues 297 to 310 (SSPGSPQSPSSGAE) show a composition bias toward low complexity. Glycyl lysine isopeptide (Lys-Gly) (interchain with G-Cter in SUMO2) cross-links involve residues Lys336 and Lys372. Ser374 bears the Phosphoserine mark. Thr377 bears the Phosphothreonine mark. Residues Lys384, Lys397, and Lys422 each participate in a glycyl lysine isopeptide (Lys-Gly) (interchain with G-Cter in SUMO2) cross-link. Ser433 bears the Phosphoserine mark. Glycyl lysine isopeptide (Lys-Gly) (interchain with G-Cter in SUMO2) cross-links involve residues Lys435, Lys439, Lys451, and Lys464. Ser495 carries the phosphoserine modification. The C2H2-type 1; degenerate zinc finger occupies 533 to 552 (YRCLECGDAFSLEKSLARHY). 5 consecutive C2H2-type zinc fingers follow at residues 705-727 (NVCP…QRMH), 764-787 (YRCP…QTSH), 792-815 (HKCP…YSQH), 827-849 (YKCA…FDQH), and 858-881 (FKCP…KNTH). The span at 880-890 (THQSGRLEETA) shows a compositional bias: basic and acidic residues. Residues 880-957 (THQSGRLEET…LGSKGLKGGG (78 aa)) are disordered. Residue Thr900 is modified to Phosphothreonine. Residues 915-925 (AAPATEESSSS) are compositionally biased toward low complexity. Lys954 is covalently cross-linked (Glycyl lysine isopeptide (Lys-Gly) (interchain with G-Cter in SUMO2)). 2 C2H2-type zinc fingers span residues 963–986 (WTCG…KKEH) and 993–1016 (FPCR…RVNH). A Glycyl lysine isopeptide (Lys-Gly) (interchain with G-Cter in SUMO2) cross-link involves residue Lys1043. The interval 1051–1121 (LQLGAQSPGR…LRYRSSSSTE (71 aa)) is disordered. Ser1057 is modified (phosphoserine). Omega-N-methylarginine is present on Arg1060. 3 positions are modified to phosphoserine: Ser1082, Ser1083, and Ser1085. Omega-N-methylarginine is present on Arg1101. Ser1106 and Ser1118 each carry phosphoserine. The C2H2-type 9 zinc-finger motif lies at 1135–1158 (QQCLDCGLCFASPGSLSRHRFISH). Positions 1159 to 1195 (KKRRGVGKASALGLGDGEEEAPPSRSDPDGGDSPLPA) are disordered. Residues Ser1184, Ser1191, and Ser1211 each carry the phosphoserine modification. The C2H2-type 10 zinc-finger motif lies at 1200-1222 (LTCKVCGKSCDSPLNLKTHFRTH).

Belongs to the krueppel C2H2-type zinc-finger protein family. As to quaternary structure, interacts with ZMYND8. As to expression, widely expressed with highest levels in obvary, muscle, blood and lung.

It is found in the cytoplasm. The protein localises to the nucleus. May be involved in transcriptional regulation. In Homo sapiens (Human), this protein is Zinc finger protein 687 (ZNF687).